The sequence spans 214 residues: Pyridoxine/pyridoxamine 5'-phosphate oxidase (214 aa).

Substrate is bound by residues 10 to 13 (RLNY) and lysine 68. Residues 63–68 (RMVLLK), 78–79 (YT), lysine 85, and glutamine 107 contribute to the FMN site. Tyrosine 125, arginine 129, and serine 133 together coordinate substrate. FMN is bound by residues 142-143 (QS) and tryptophan 187. 193 to 195 (RLH) is a binding site for substrate. Residue arginine 197 coordinates FMN.

This sequence belongs to the pyridoxamine 5'-phosphate oxidase family. Homodimer. The cofactor is FMN.

The enzyme catalyses pyridoxamine 5'-phosphate + O2 + H2O = pyridoxal 5'-phosphate + H2O2 + NH4(+). The catalysed reaction is pyridoxine 5'-phosphate + O2 = pyridoxal 5'-phosphate + H2O2. It functions in the pathway cofactor metabolism; pyridoxal 5'-phosphate salvage; pyridoxal 5'-phosphate from pyridoxamine 5'-phosphate: step 1/1. It participates in cofactor metabolism; pyridoxal 5'-phosphate salvage; pyridoxal 5'-phosphate from pyridoxine 5'-phosphate: step 1/1. In terms of biological role, catalyzes the oxidation of either pyridoxine 5'-phosphate (PNP) or pyridoxamine 5'-phosphate (PMP) into pyridoxal 5'-phosphate (PLP). This Synechocystis sp. (strain ATCC 27184 / PCC 6803 / Kazusa) protein is Pyridoxine/pyridoxamine 5'-phosphate oxidase.